The primary structure comprises 231 residues: Large ribosomal subunit protein uL1 (231 aa).

This sequence belongs to the universal ribosomal protein uL1 family. Part of the 50S ribosomal subunit.

In terms of biological role, binds directly to 23S rRNA. The L1 stalk is quite mobile in the ribosome, and is involved in E site tRNA release. Functionally, protein L1 is also a translational repressor protein, it controls the translation of the L11 operon by binding to its mRNA. The sequence is that of Large ribosomal subunit protein uL1 from Acinetobacter baumannii (strain AB0057).